The chain runs to 251 residues: MKIIIAPAKKMQVDTDSFDATTMPVYLKQTQKILTMMKQLTYSDLKMLWKCSDKLAQLNYERLQGLDLKYQLTPAIMAYVGIQYQYMAPDLMTEKQLAYIQEHLRILSGFYGVLRPFDGIVPYRLEMQAKLKIDNYNNLCQFWGAKLYQNLYKDNRAVVNLASKEYEKAVRPFLQEDDKMTTCIFGEIIDGKVKQKATPAKEARGEMVNFMALNQVKNTKELKSFDRLNYAYRADLSSADKMVFIKNELHK.

Belongs to the UPF0246 family.

This is UPF0246 protein PEPE_1842 from Pediococcus pentosaceus (strain ATCC 25745 / CCUG 21536 / LMG 10740 / 183-1w).